The following is a 1193-amino-acid chain: Non-toxic nonhemagglutinin type A (1193 aa).

The segment at 1–408 (MNINDNLSIN…PEEIINLLNG (408 aa)) is light chain nLC. Residues 409–829 (NNVSLMRSNI…LFSSETALLI (421 aa)) are N-heavy chain nHN. Cysteines 583 and 755 form a disulfide. Positions 830–1193 (KEETWPYELV…SKYLYLWSFK (364 aa)) are C-heavy chain nHC; required for protection of BoNT/A at pH 2.0.

It belongs to the botulism non-toxic nonhemagglutinin family. In terms of assembly, forms a highly interlocked heterodimer with botulinum neurotoxin type A at pH 6.0 but not at pH 7.5, called the minimally functional progenitor toxin complex (M-PTC) (BoNT/A, botA). In terms of processing, the 133-Lys-|-Lys-134 bond is cleaved during long-term storage; the cleavage site is masked in the M-PTC complex.

In terms of biological role, assembles with botulinum neurotoxin type A (BoNT/A) and protects it against pH-mediated inactivation or protease activity at pH 2.6 (the pH of the animal gastrointestinal tract) but not at pH 6.0. Necessary for neurotoxicity. The protein is Non-toxic nonhemagglutinin type A of Clostridium botulinum.